A 385-amino-acid polypeptide reads, in one-letter code: ATP phosphoribosyltransferase regulatory subunit (385 aa).

This sequence belongs to the class-II aminoacyl-tRNA synthetase family. HisZ subfamily. As to quaternary structure, heteromultimer composed of HisG and HisZ subunits.

The protein resides in the cytoplasm. It functions in the pathway amino-acid biosynthesis; L-histidine biosynthesis; L-histidine from 5-phospho-alpha-D-ribose 1-diphosphate: step 1/9. Its function is as follows. Required for the first step of histidine biosynthesis. May allow the feedback regulation of ATP phosphoribosyltransferase activity by histidine. The polypeptide is ATP phosphoribosyltransferase regulatory subunit (Bordetella petrii (strain ATCC BAA-461 / DSM 12804 / CCUG 43448)).